The sequence spans 312 residues: Very-long-chain 3-oxoacyl-CoA reductase (312 aa).

Residues 4–24 (APPAAGFLYWVGASTIAYLAL) form a helical membrane-spanning segment. 50-79 (GEWAVVTGGTDGIGKAYAEELAKRGMKIVL) contacts NADP(+). 2 helical membrane-spanning segments follow: residues 182–202 (GVIL…LTIY) and 269–285 (TTGY…NSIM). Ser-189 is a binding site for substrate. Residue Tyr-202 is the Proton acceptor of the active site. Positions 308 to 312 (KRKKN) match the Di-lysine motif motif.

It belongs to the short-chain dehydrogenases/reductases (SDR) family. 17-beta-HSD 3 subfamily. In terms of tissue distribution, expressed in most tissues tested.

It localises to the endoplasmic reticulum membrane. It carries out the reaction a very-long-chain (3R)-3-hydroxyacyl-CoA + NADP(+) = a very-long-chain 3-oxoacyl-CoA + NADPH + H(+). The enzyme catalyses 17beta-estradiol + NAD(+) = estrone + NADH + H(+). It catalyses the reaction 17beta-estradiol + NADP(+) = estrone + NADPH + H(+). The catalysed reaction is 3-oxooctadecanoyl-CoA + NADPH + H(+) = (3R)-hydroxyoctadecanoyl-CoA + NADP(+). It carries out the reaction (7Z,10Z,13Z,16Z)-3-oxodocosatetraenoyl-CoA + NADPH + H(+) = (3R)-hydroxy-(7Z,10Z,13Z,16Z)-docosatetraenoyl-CoA + NADP(+). The enzyme catalyses 3-oxo-(7Z,10Z,13Z,16Z,19Z)-docosapentaenoyl-CoA + NADPH + H(+) = (3R)-hydroxy-(7Z,10Z,13Z,16Z,19Z)-docosapentaenoyl-CoA + NADP(+). It catalyses the reaction (8Z,11Z,14Z)-3-oxoeicosatrienoyl-CoA + NADPH + H(+) = (3R)-hydroxy-(8Z,11Z,14Z)-eicosatrienoyl-CoA + NADP(+). Its pathway is lipid metabolism; fatty acid biosynthesis. The protein operates within steroid biosynthesis; estrogen biosynthesis. Functionally, catalyzes the second of the four reactions of the long-chain fatty acids elongation cycle. This endoplasmic reticulum-bound enzymatic process, allows the addition of two carbons to the chain of long- and very long-chain fatty acids/VLCFAs per cycle. This enzyme has a 3-ketoacyl-CoA reductase activity, reducing 3-ketoacyl-CoA to 3-hydroxyacyl-CoA, within each cycle of fatty acid elongation. Thereby, it may participate in the production of VLCFAs of different chain lengths that are involved in multiple biological processes as precursors of membrane lipids and lipid mediators. May also catalyze the transformation of estrone (E1) into estradiol (E2) and play a role in estrogen formation. This Mus musculus (Mouse) protein is Very-long-chain 3-oxoacyl-CoA reductase.